The primary structure comprises 245 residues: Histone deacetylase HDT1 (245 aa).

Methionine 1 bears the N-acetylmethionine mark. Required to repress transcription regions lie at residues 2–5 (EFWG) and 101–162 (GYSE…EEEE). Residues 99–245 (PQGYSEEEEE…HNKAKHAAAK (147 aa)) are disordered. Over residues 103-113 (SEEEEEEEEEV) the composition is skewed to acidic residues. The segment covering 114-124 (PAGNAAKAVAK) has biased composition (low complexity). The segment covering 137 to 162 (DDEEDESDSDGMDEDDSDGEDSEEEE) has biased composition (acidic residues). Over residues 178 to 195 (TTPKAPVSAKKAKVAVTP) the composition is skewed to low complexity. A compositionally biased stretch (polar residues) spans 208–234 (ANQSPKSASQVSCGSCKKTFNSGNALE). Phosphoserine is present on serine 211. The segment at 218-241 (VSCGSCKKTFNSGNALESHNKAKH) adopts a C2H2-type zinc-finger fold.

Belongs to the histone deacetylase HD2 family. Interacts with DNMT2. Interacts with DEK3. Expressed in leaves, roots, stems, young plantlets, flowers and siliques. Highest levels in ovules, embryos, shoot apical meristems and first leaves. Also expressed in somatic embryos.

It localises to the nucleus. It is found in the nucleolus. In terms of biological role, probably mediates the deacetylation of lysine residues on the N-terminal part of the core histones (H2A, H2B, H3 and H4). Histone deacetylation gives a tag for epigenetic repression and plays an important role in transcriptional regulation, cell cycle progression and developmental events. Required for histone H3 'Lys-9' deacetylation. Involved in rRNA gene silencing in nucleolar dominance. Seems to be implicated in the regulation of genes involved in seeds development. The sequence is that of Histone deacetylase HDT1 from Arabidopsis thaliana (Mouse-ear cress).